The chain runs to 59 residues: Conotoxin Cl14.4 (59 aa).

A signal peptide spans 1-19; it reads MKFLLFLSVALLLTSFIET. A propeptide spanning residues 20-36 is cleaved from the precursor; it reads VTVNKAGMERPSRALVG. Isoleucine amide is present on isoleucine 58.

In terms of processing, contains 2 disulfide bonds. In terms of tissue distribution, expressed by the venom duct.

It is found in the secreted. The sequence is that of Conotoxin Cl14.4 from Californiconus californicus (California cone).